The sequence spans 1253 residues: Structural polyprotein (1253 aa).

The segment at 37–71 is host transcription inhibition; that stretch reads FQAQQMQQLISAVNALTMRQNAIAPARPPKPKKKK. A disordered region spans residues 58-109; sequence AIAPARPPKPKKKKTTKPKPKTQPKKINGKTQQQKKKDKQADKKKKKPGKRE. The Nuclear localization signal motif lies at 64–105; that stretch reads PPKPKKKKTTKPKPKTQPKKINGKTQQQKKKDKQADKKKKKP. Over residues 65–107 the composition is skewed to basic residues; the sequence is PKPKKKKTTKPKPKTQPKKINGKTQQQKKKDKQADKKKKKPGK. The interval 87–120 is binding to the viral RNA; the sequence is KTQQQKKKDKQADKKKKKPGKRERMCMKIENDCI. A ribosome-binding region spans residues 105–119; it reads PGKRERMCMKIENDC. A disulfide bridge links cysteine 119 with cysteine 134. The Peptidase S3 domain occupies 119–267; sequence CIFEVKHEGK…RVTPEGSEEW (149 aa). The active-site Charge relay system is the histidine 145. Residues 150–160 carry the Nuclear export signal motif; the sequence is IDNADLAKLAF. Positions 161–166 are interaction with spike glycoprotein E2; sequence KKSSKY. The active-site Charge relay system is the aspartate 167. The tract at residues 189-199 is dimerization of the capsid protein; the sequence is PEGHYNWHHGA. Serine 219 functions as the Charge relay system in the catalytic mechanism. A dimerization of the capsid protein region spans residues 225–229; sequence DNKGR. The Extracellular segment spans residues 268-701; the sequence is SAPLITAMCV…YGLYPAATVS (434 aa). Disulfide bonds link cysteine 276–cysteine 285, cysteine 290–cysteine 294, and cysteine 293–cysteine 325. The N-linked (GlcNAc...) asparagine; by host glycan is linked to asparagine 280. An N-linked (GlcNAc...) asparagine; by host glycan is attached at asparagine 327. Intrachain disulfides connect cysteine 352–cysteine 458, cysteine 355–cysteine 361, cysteine 424–cysteine 438, cysteine 486–cysteine 598, cysteine 534–cysteine 558, and cysteine 536–cysteine 553. The N-linked (GlcNAc...) asparagine; by host glycan is linked to asparagine 533. Asparagine 595 carries an N-linked (GlcNAc...) asparagine; by host glycan. The helical transmembrane segment at 702–722 threads the bilayer; sequence AVVGMSLLALISIFASCYMLV. Residue cysteine 718 is the site of S-stearoyl cysteine; by host attachment. The interval 723-727 is interaction with the capsid protein; the sequence is AARSK. Residues 723-755 lie on the Cytoplasmic side of the membrane; the sequence is AARSKCLTPYALTPGAAVPWTLGILCCAPRAHA. Cysteine 728 carries the S-stearoyl cysteine; by host lipid modification. The interval 728 to 748 is transient transmembrane before p62-6K protein processing; the sequence is CLTPYALTPGAAVPWTLGILC. Cysteine 728 and cysteine 749 are oxidised to a cystine. 2 S-palmitoyl cysteine; by host lipidation sites follow: cysteine 748 and cysteine 749. Residues 756–770 are Extracellular-facing; the sequence is ASVAETMAYLWDQNQ. Residues 771-791 form a helical membrane-spanning segment; it reads ALFWLEFAAPVACILIITYCL. Arginine 792 is a topological domain (cytoplasmic). A helical membrane pass occupies residues 793-813; it reads NVLCCCKSLSFLVLLSLGATA. The Extracellular portion of the chain corresponds to 814 to 1230; that stretch reads RAYEHSTVMP…ALSWVQKISG (417 aa). 4 disulfides stabilise this stretch: cysteine 864–cysteine 929, cysteine 877–cysteine 909, cysteine 878–cysteine 911, and cysteine 883–cysteine 893. Residues 899-916 form an E1 fusion peptide loop region; that stretch reads VYPFMWGGAYCFCDSENT. N-linked (GlcNAc...) asparagine; by host glycans are attached at residues asparagine 956 and asparagine 1085. 4 cysteine pairs are disulfide-bonded: cysteine 1074–cysteine 1086, cysteine 1116–cysteine 1191, cysteine 1121–cysteine 1195, and cysteine 1143–cysteine 1185. Residues 1112–1192 form an E1-DIII; interaction with host receptor VLDLR region; that stretch reads IDLTCTVATC…SLCSARATCS (81 aa). Residues 1231 to 1251 traverse the membrane as a helical segment; it reads GLGAFAIGAILVLVVVTCIGL. Cysteine 1248 carries S-stearoyl cysteine; by host lipidation. The Cytoplasmic portion of the chain corresponds to 1252–1253; it reads RR.

Homodimer. Homomultimer. Interacts with host karyopherin KPNA4; this interaction allows the nuclear import of the viral capsid protein. Interacts with spike glycoprotein E2. Interacts with host IRAK1; the interaction leads to inhibition of IRAK1-dependent signaling. As to quaternary structure, the precursor of protein E3/E2 and E1 form a heterodimer shortly after synthesis. In terms of assembly, the precursor of protein E3/E2 and E1 form a heterodimer shortly after synthesis. Processing of the precursor of protein E3/E2 into E2 and E3 results in a heterodimer of the spike glycoproteins E2 and E1. Spike at virion surface are constituted of a trimer of E2-E1 heterodimers. E2-E1 heterodimers interact with host VLDLR or LRP8/APOER2 to mediate viral entry. After target cell attachment and endocytosis, E1 change conformation to form homotrimers. Interacts with 6K protein. Interacts (via E1-DIII) with host VLDLR (via class A repeats); this interaction mediates viral entry into host cell. Interacts with spike glycoprotein E1. Processing of the precursor of protein E3/E2 into E2 and E3 results in a heterodimer of the spike glycoproteins E2 and E1. Spike at virion surface are constituted of a trimer of E2-E1 heterodimers. E2-E1 heterodimers interact with host VLDLR or LRP8/APOER2 to mediate viral entry. Interacts with 6K protein. As to quaternary structure, oligomer. Interacts with spike glycoprotein E1. Interacts with spike glycoprotein E2. Specific enzymatic cleavages in vivo yield mature proteins. Capsid protein is auto-cleaved during polyprotein translation, unmasking a signal peptide at the N-terminus of the precursor of E3/E2. The remaining polyprotein is then targeted to the host endoplasmic reticulum, where host signal peptidase cleaves it into pE2, 6K and E1 proteins. pE2 is further processed to mature E3 and E2 by host furin in trans-Golgi vesicle. Protein processing process takes about 30 minutes at physiologic temperatures. The folding of the p62/6K/E1 precursor requires the formation of intrachain disulfide bonds and has been shown to involve a transient covalent interaction between the nascent and newly synthesized heterodimer and the host-cell chaperones, P4HB/PDI and PDIA3/ERp57. The folding pathway also includes non covalent interaction with human CANX/calnexin and CALR/calreticulin. Post-translationally, palmitoylated via thioester bonds. These palmitoylations may induce disruption of the C-terminus transmembrane. This would result in the reorientation of E2 C-terminus from lumenal to cytoplasmic side. In terms of processing, envelope E1, E2 and E3 proteins are N-glycosylated. Stearoylated. Post-translationally, palmitoylated via thioester bonds with about four covalently bound fatty acids per molecule.

Its subcellular location is the virion. The protein localises to the host cytoplasm. It is found in the host cell membrane. The protein resides in the host nucleus. It localises to the virion membrane. Its subcellular location is the host Golgi apparatus. The protein localises to the host trans-Golgi network. It is found in the host endoplasmic reticulum. The enzyme catalyses Autocatalytic release of the core protein from the N-terminus of the togavirus structural polyprotein by hydrolysis of a -Trp-|-Ser- bond.. Functionally, forms an icosahedral capsid with a T=4 symmetry composed of 240 copies of the capsid protein surrounded by a lipid membrane through which penetrate 80 spikes composed of trimers of E1-E2 heterodimers. The capsid protein binds to the viral RNA genome at a site adjacent to a ribosome binding site for viral genome translation following genome release. Possesses a protease activity that results in its autocatalytic cleavage from the nascent structural protein. Following its self-cleavage, the capsid protein transiently associates with ribosomes, and within several minutes the protein binds to viral RNA and rapidly assembles into icosahedric core particles. The resulting nucleocapsid eventually associates with the cytoplasmic domain of the spike glycoprotein E2 at the cell membrane, leading to budding and formation of mature virions. In case of infection, new virions attach to target cells and after clathrin-mediated endocytosis their membrane fuses with the host endosomal membrane. This leads to the release of the nucleocapsid into the cytoplasm, followed by an uncoating event necessary for the genomic RNA to become accessible. The uncoating might be triggered by the interaction of capsid proteins with ribosomes. Binding of ribosomes would release the genomic RNA since the same region is genomic RNA-binding and ribosome-binding. Specifically inhibits interleukin-1 receptor-associated kinase 1/IRAK1-dependent signaling during viral entry, representing a means by which the alphaviruses may evade innate immune detection and activation prior to viral gene expression. In terms of biological role, provides the signal sequence for the translocation of the precursor of protein E3/E2 to the host endoplasmic reticulum. Furin-cleaved E3 remains associated with spike glycoprotein E1 and mediates pH protection of the latter during the transport via the secretory pathway. After virion release from the host cell, the assembly protein E3 is gradually released in the extracellular space. Its function is as follows. Plays a role in viral attachment to target host cell, by binding to the cell receptors VLDLR or LRP8/APOER2. The host LDLR can act as a cell receptor for viral entry. Synthesized as a p62 precursor which is processed by furin at the cell membrane just before virion budding, giving rise to E2-E1 heterodimer. The p62-E1 heterodimer is stable, whereas E2-E1 is unstable and dissociate at low pH. p62 is processed at the last step, presumably to avoid E1 fusion activation before its final export to cell surface. E2 C-terminus contains a transitory transmembrane that would be disrupted by palmitoylation, resulting in reorientation of the C-terminal tail from lumenal to cytoplasmic side. This step is critical since E2 C-terminus is involved in budding by interacting with capsid proteins. This release of E2 C-terminus in cytoplasm occurs lately in protein export, and precludes premature assembly of particles at the endoplasmic reticulum membrane. Acts as a viroporin that participates in virus glycoprotein processing and transport to the plasma membrane, cell permeabilization and budding of viral particles. Disrupts the calcium homeostasis of the cell, probably at the endoplasmic reticulum level. This leads to cytoplasmic calcium elevation. Because of its lipophilic properties, the 6K protein is postulated to influence the selection of lipids that interact with the transmembrane domains of the glycoproteins, which, in turn, affects the deformability of the bilayer required for the extreme curvature that occurs as budding proceeds. Present in low amount in virions, about 3% compared to viral glycoproteins. Functionally, class II viral fusion protein. Fusion activity is inactive as long as E1 is bound to E2 in mature virion. After virus attachment to target cell via host VLDLR or LRP8/APOER2 and endocytosis, acidification of the endosome induces dissociation of E1/E2 heterodimer and concomitant trimerization of the E1 subunits. This E1 trimer is fusion active, and promotes release of viral nucleocapsid in cytoplasm after endosome and viral membrane fusion. Efficient fusion requires the presence of cholesterol and sphingolipid in the target membrane. Fusion is optimal at levels of about 1 molecule of cholesterol per 2 molecules of phospholipids, and is specific for sterols containing a 3-beta-hydroxyl group. The protein is Structural polyprotein of Aedes (Middle-African hedgehog).